The following is a 354-amino-acid chain: Protein-arginine kinase (354 aa).

A Phosphagen kinase C-terminal domain is found at 24–254 (IVLSSRIRLA…QQIIQQEKMA (231 aa)). ATP-binding positions include 27–31 (SSRIR), His-92, Arg-125, 176–180 (RASVM), and 207–212 (RGIYGE). Residues 337–342 (RDYRRA) carry the RDXXRA motif of the pArg binding pocket involved in allosteric regulation motif.

The protein belongs to the ATP:guanido phosphotransferase family.

The catalysed reaction is L-arginyl-[protein] + ATP = N(omega)-phospho-L-arginyl-[protein] + ADP + H(+). Appears to be allosterically activated by the binding of pArg-containing polypeptides to the pArg-binding pocket localized in the C-terminal domain of McsB. Catalyzes the specific phosphorylation of arginine residues in a large number of proteins. Is part of the bacterial stress response system. Protein arginine phosphorylation has a physiologically important role and is involved in the regulation of many critical cellular processes, such as protein homeostasis, motility, competence, and stringent and stress responses, by regulating gene expression and protein activity. The chain is Protein-arginine kinase from Bacillus cereus (strain AH187).